We begin with the raw amino-acid sequence, 505 residues long: Maturase K (505 aa).

Belongs to the intron maturase 2 family. MatK subfamily.

It is found in the plastid. It localises to the chloroplast. Functionally, usually encoded in the trnK tRNA gene intron. Probably assists in splicing its own and other chloroplast group II introns. The sequence is that of Maturase K from Beta vulgaris (Sugar beet).